A 148-amino-acid polypeptide reads, in one-letter code: Hemoglobin subunit beta-B (148 aa).

The Globin domain occupies 3–148; that stretch reads DWTDAERAAI…VVSALGRQYH (146 aa). Residues His64 and His93 each coordinate heme b.

It belongs to the globin family. As to quaternary structure, heterotetramer of two alpha chains and two beta chains. Red blood cells.

In terms of biological role, involved in oxygen transport from gills to the various peripheral tissues. The chain is Hemoglobin subunit beta-B (hbb2) from Seriola quinqueradiata (Five-ray yellowtail).